A 70-amino-acid chain; its full sequence is Conotoxin Cal6.11 (70 aa).

The signal sequence occupies residues 1 to 22; that stretch reads MKLTCVLIIAVLILTACQFIAA. Positions 23 to 43 are excised as a propeptide; the sequence is DNTEYRKWRRSGTSTGMRLGS. Cystine bridges form between cysteine 46–cysteine 57, cysteine 50–cysteine 62, and cysteine 56–cysteine 69. Proline 48 and proline 58 each carry 4-hydroxyproline. 2 positions are modified to 4-carboxyglutamate: glutamate 60 and glutamate 67.

Belongs to the conotoxin O1 superfamily. Expressed by the venom duct.

The protein resides in the secreted. Probable neurotoxin with unknown target. Possibly targets ion channels. The sequence is that of Conotoxin Cal6.11 from Californiconus californicus (California cone).